The sequence spans 546 residues: Medium-chain-fatty-acid--CoA ligase (546 aa).

Residue T185 participates in Mg(2+) binding. Residues W235 and T329 each coordinate ATP. E330 is a Mg(2+) binding site. ATP-binding residues include D417, K434, K438, and W443.

It belongs to the ATP-dependent AMP-binding enzyme family.

Its subcellular location is the cytoplasm. It carries out the reaction a medium-chain fatty acid + ATP + CoA = a medium-chain fatty acyl-CoA + AMP + diphosphate. The protein operates within lipid metabolism; fatty acid metabolism. This Ectopseudomonas oleovorans (Pseudomonas oleovorans) protein is Medium-chain-fatty-acid--CoA ligase.